The chain runs to 78 residues: Large ribosomal subunit protein bL28 (78 aa).

It belongs to the bacterial ribosomal protein bL28 family.

The chain is Large ribosomal subunit protein bL28 from Escherichia coli O139:H28 (strain E24377A / ETEC).